Consider the following 218-residue polypeptide: Small ribosomal subunit protein uS3c (218 aa).

Residues 47–118 form the KH type-2 domain; the sequence is IQKTIKISSG…KLNIAITRIA (72 aa).

Belongs to the universal ribosomal protein uS3 family. As to quaternary structure, part of the 30S ribosomal subunit.

The protein localises to the plastid. Its subcellular location is the chloroplast. The polypeptide is Small ribosomal subunit protein uS3c (rps3) (Lotus japonicus (Lotus corniculatus var. japonicus)).